Consider the following 225-residue polypeptide: Prepilin leader peptidase/N-methyltransferase (225 aa).

The Periplasmic portion of the chain corresponds to 1 to 2 (MT). Residues 3 to 23 (MLLPLFILVGFIADYFVNAIA) traverse the membrane as a helical segment. Over 24-67 (YHLSPLEDKTALTFRQVLVHFRQKKYAWHDTVPLILCVAAAIAC) the chain is Cytoplasmic. Residues 68-88 (ALAPFTPIVTGALFLYFCFVL) traverse the membrane as a helical segment. At 89 to 103 (TLSVIDFRTQLLPDK) the chain is on the periplasmic side. A helical transmembrane segment spans residues 104 to 124 (LTLPLLWLGLVFNAQYGLIDL). The Cytoplasmic segment spans residues 125–127 (HDA). The helical transmembrane segment at 128–148 (VYGAVAGYGVLWCVYWGVWLV) threads the bilayer. Residues 149-174 (CHKEGLGYGDFKLLAAAGAWCGWQTL) lie on the Periplasmic side of the membrane. A helical membrane pass occupies residues 175–195 (PMILLIASLGGIGYAIVSQLL). At 196 to 202 (QRRTITT) the chain is on the cytoplasmic side. A helical membrane pass occupies residues 203-223 (IAFGPWLALGSMINLGYLAWI). Over 224–225 (SY) the chain is Periplasmic.

Belongs to the peptidase A24 family.

It localises to the cell inner membrane. The catalysed reaction is Typically cleaves a -Gly-|-Phe- bond to release an N-terminal, basic peptide of 5-8 residues from type IV prepilin, and then N-methylates the new N-terminal amino group, the methyl donor being S-adenosyl-L-methionine.. Its function is as follows. Plays a role in type II pseudopili formation by proteolytically removing the leader sequence from substrate proteins and subsequently monomethylating the alpha-amino group of the newly exposed N-terminal phenylalanine. Substrates include proteins required for biogenesis of the type II general secretory apparatus. This chain is Prepilin leader peptidase/N-methyltransferase (gspO), found in Escherichia coli (strain K12).